The following is a 652-amino-acid chain: Thioredoxin reductase 3 (652 aa).

Residues 1-12 are compositionally biased toward pro residues; sequence MEKPPSPPPPPR. Residues 1–62 form a disordered region; the sequence is MEKPPSPPPP…TSRPSSEARE (62 aa). Position 34 is an asymmetric dimethylarginine; alternate (R34). Residue R34 is modified to Omega-N-methylarginine; alternate. A Phosphoserine modification is found at S50. The 101-residue stretch at 65–165 folds into the Glutaredoxin domain; the sequence is RRRLRDLIEG…KLLQDDSAHD (101 aa). An FAD-binding site is contributed by 167–196; sequence DLIIIGGGSGGLSCAKEAANLGKKVMVLDF. A disulfide bridge links C212 with C217. Residue K388 is modified to N6-succinyllysine. H625 serves as the catalytic Proton acceptor. Positions 650-651 form a cross-link, cysteinyl-selenocysteine (Cys-Sec); sequence CU. A non-standard amino acid (selenocysteine) is located at residue U651.

It belongs to the class-I pyridine nucleotide-disulfide oxidoreductase family. In terms of assembly, homodimer. It depends on FAD as a cofactor. Expressed preferentially in testis where it is found in spermatids and spermatocytes but not in sperm. In elongating spermatids, expressed at the site of mitochondrial sheath formation. Low levels in other tissues including heart, lung, liver, kidney, brain, muscle and prostate.

It localises to the cytoplasm. The protein localises to the nucleus. The protein resides in the microsome. It is found in the endoplasmic reticulum. The catalysed reaction is [thioredoxin]-dithiol + NADP(+) = [thioredoxin]-disulfide + NADPH + H(+). Displays thioredoxin reductase, glutaredoxin and glutathione reductase activities. Catalyzes disulfide bond isomerization. Promotes disulfide bond formation between GPX4 and various sperm proteins and may play a role in sperm maturation by promoting formation of sperm structural components. The protein is Thioredoxin reductase 3 of Mus musculus (Mouse).